The sequence spans 736 residues: MGSPLRFDGRVVLVTGAGAGLGRAYALAFAERGALVVVNDLGGDFKGVGKGSLAADKVVEEIRRRGGKAVANYDSVEEGEKVVKTALDAFGRIDVVVNNAGILRDRSFARISDEDWDIIHRVHLRGSFQVTRAAWEHMKKQKYGRIIMTSSASGIYGNFGQANYSAAKLGLLGLANSLAIEGRKSNIHCNTIAPNAGSRMTQTVMPEDLVEALKPEYVAPLVLWLCHESCEENGGLFEVGAGWIGKLRWERTLGAIVRQKNHPMTPEAVKANWKKICDFENASKPQSIQESTGSIIEVLSKIDSEGGVSANHTSRATSTATSGFAGAIGQKLPPFSYAYTELEAIMYALGVGASIKDPKDLKFIYEGSSDFSCLPTFGVIIGQKSMMGGGLAEIPGLSINFAKVLHGEQYLELYKPLPRAGKLKCEAVVADVLDKGSGVVIIMDVYSYSEKELICHNQFSLFLVGSGGFGGKRTSDKVKVAVAIPNRPPDAVLTDTTSLNQAALYRLSGDWNPLHIDPNFASLAGFDKPILHGLCTFGFSARRVLQQFADNDVSRFKAIKARFAKPVYPGQTLQTEMWKEGNRIHFQTKVQETGDIVISNAYVDLAPTSGTSAKTPSEGGKLQSTFVFEEIGRRLKDIGPEVVKKVNAVFEWHITKGGNIGAKWTIDLKSGSGKVYQGPAKGAADTTIILSDEDFMEVVLGKLDPQKAFFSGRLKARGNIMLSQKLQMILKDYAKL.

Residues 1–305 (MGSPLRFDGR…IEVLSKIDSE (305 aa)) are (3R)-hydroxyacyl-CoA dehydrogenase. Residues 13-37 (LVTG…ALVV), Leu21, and Asp40 contribute to the NAD(+) site. An N6-acetyllysine; alternate modification is found at Lys46. Residue Lys46 is modified to N6-succinyllysine; alternate. Ser52 is subject to Phosphoserine. N6-succinyllysine is present on residues Lys57 and Lys68. Residue 75–76 (SV) coordinates NAD(+). Residue Lys84 is modified to N6-succinyllysine. Asn99 contacts NAD(+). Residue Ser151 participates in substrate binding. Tyr164 serves as the catalytic Proton acceptor. NAD(+)-binding positions include 164 to 168 (YSAAK) and 196 to 199 (AGSR). Phosphothreonine is present on Thr265. Residue Lys275 is modified to N6-succinyllysine. Phosphoserine occurs at positions 304 and 309. Positions 322-622 (SGFAGAIGQK…AKTPSEGGKL (301 aa)) are enoyl-CoA hydratase 2. N6-succinyllysine is present on Lys356. 406 to 407 (HG) is a binding site for (3R)-3-hydroxydecanoyl-CoA. An N6-succinyllysine modification is found at Lys424. Residues Lys435, 510–515 (DWNPLH), Gly533, and Phe563 contribute to the (3R)-3-hydroxydecanoyl-CoA site. The region spanning 484–600 (IPNRPPDAVL…QETGDIVISN (117 aa)) is the MaoC-like domain. Lys565 carries the post-translational modification N6-acetyllysine. N6-succinyllysine occurs at positions 579 and 663. In terms of domain architecture, SCP2 spans 624 to 736 (STFVFEEIGR…QMILKDYAKL (113 aa)). At Lys669 the chain carries N6-acetyllysine. Gln706 provides a ligand contact to substrate. Lys707 carries the N6-acetyllysine modification. Gln724 contacts substrate. Lys725 bears the N6-succinyllysine mark. The Microbody targeting signal signature appears at 734 to 736 (AKL).

It belongs to the short-chain dehydrogenases/reductases (SDR) family. As to quaternary structure, homodimer. Present in many tissues with highest concentrations in liver, heart, prostate and testis.

It is found in the peroxisome. The enzyme catalyses a (3R)-3-hydroxyacyl-CoA + NAD(+) = a 3-oxoacyl-CoA + NADH + H(+). It carries out the reaction a (3R)-3-hydroxyacyl-CoA = a (2E)-enoyl-CoA + H2O. The catalysed reaction is (24R,25R)-3alpha,7alpha,12alpha,24-tetrahydroxy-5beta-cholestan-26-oyl-CoA = (24E)-3alpha,7alpha,12alpha-trihydroxy-5beta-cholest-24-en-26-oyl-CoA + H2O. It catalyses the reaction (2E)-octenoyl-CoA + H2O = (3R)-hydroxyoctanoyl-CoA. The enzyme catalyses (3R)-hydroxyoctanoyl-CoA + NAD(+) = 3-oxooctanoyl-CoA + NADH + H(+). It carries out the reaction (3R)-hydroxyhexadecanoyl-CoA + NAD(+) = 3-oxohexadecanoyl-CoA + NADH + H(+). The catalysed reaction is (2E)-hexadecenedioyl-CoA + H2O = (3R)-hydroxyhexadecanedioyl-CoA. It catalyses the reaction (3R)-hydroxyhexadecanedioyl-CoA + NAD(+) = 3-oxohexadecanedioyl-CoA + NADH + H(+). The enzyme catalyses (3R)-hydroxyhexadecanoyl-CoA = (2E)-hexadecenoyl-CoA + H2O. It carries out the reaction (3R)-3-hydroxydecanoyl-CoA = (2E)-decenoyl-CoA + H2O. The catalysed reaction is (3R)-3-hydroxydecanoyl-CoA + NAD(+) = 3-oxodecanoyl-CoA + NADH + H(+). It catalyses the reaction (24R,25R)-3alpha,7alpha,12alpha,24-tetrahydroxy-5beta-cholestan-26-oyl-CoA + NAD(+) = 3alpha,7alpha,12alpha-trihydroxy-24-oxo-5beta-cholestan-26-oyl-CoA + NADH + H(+). Its pathway is lipid metabolism; fatty acid beta-oxidation. In terms of biological role, bifunctional enzyme acting on the peroxisomal fatty acid beta-oxidation pathway. Catalyzes two of the four reactions in fatty acid degradation: hydration of 2-enoyl-CoA (trans-2-enoyl-CoA) to produce (3R)-3-hydroxyacyl-CoA, and dehydrogenation of (3R)-3-hydroxyacyl-CoA to produce 3-ketoacyl-CoA (3-oxoacyl-CoA), which is further metabolized by SCPx. Can use straight-chain and branched-chain fatty acids, as well as bile acid intermediates as substrates. This Homo sapiens (Human) protein is Peroxisomal multifunctional enzyme type 2.